Reading from the N-terminus, the 341-residue chain is Phosphoribosylformylglycinamidine cyclo-ligase (341 aa).

This sequence belongs to the AIR synthase family.

Its subcellular location is the cytoplasm. The enzyme catalyses 2-formamido-N(1)-(5-O-phospho-beta-D-ribosyl)acetamidine + ATP = 5-amino-1-(5-phospho-beta-D-ribosyl)imidazole + ADP + phosphate + H(+). It functions in the pathway purine metabolism; IMP biosynthesis via de novo pathway; 5-amino-1-(5-phospho-D-ribosyl)imidazole from N(2)-formyl-N(1)-(5-phospho-D-ribosyl)glycinamide: step 2/2. This chain is Phosphoribosylformylglycinamidine cyclo-ligase, found in Xanthomonas campestris pv. campestris (strain 8004).